The chain runs to 432 residues: MQLLTIGINHHTAPVALRERVAFPLEQIKPALVTFKNVFLGPQAPNTPEAAILSTCNRTELYCATDDRAAREGAVRWLSEYHRIPVDELAPHVYALPQSEAVRHAFRVASGLDSMVLGETQILGQMKDAVRTATEAGALGTYLNQLFQRTFAVAKEVRGTTEIGTQSVSMAAAAVRLAQRIFEKVSDQRVLFIGAGEMIELCATHFAAQGPRELVVANRTAERGQRLAERFNGRAMPLADLPTRMHEFDIIVSCTASTLPIIGLGAVERAVKARRHRPIFMVDLAVPRDIEPEVGKLKDVFLYTVDDLGAIVREGNASRQAAVAQAEAIIETRVQNFMQWLDTRSVVPVIRHMHTQADALRRAEVEKAQKLLARGDDPAAVLEALSQALTNKLIHGPTSALNRVNGADRDSLIDLMRGFYQHAPRSNDQSGH.

Residues 55–58 (TCNR), Ser-114, 119–121 (ETQ), and Gln-125 contribute to the substrate site. Residue Cys-56 is the Nucleophile of the active site. 194–199 (GAGEMI) provides a ligand contact to NADP(+).

It belongs to the glutamyl-tRNA reductase family. As to quaternary structure, homodimer.

The enzyme catalyses (S)-4-amino-5-oxopentanoate + tRNA(Glu) + NADP(+) = L-glutamyl-tRNA(Glu) + NADPH + H(+). It functions in the pathway porphyrin-containing compound metabolism; protoporphyrin-IX biosynthesis; 5-aminolevulinate from L-glutamyl-tRNA(Glu): step 1/2. Functionally, catalyzes the NADPH-dependent reduction of glutamyl-tRNA(Glu) to glutamate 1-semialdehyde (GSA). The sequence is that of Glutamyl-tRNA reductase from Burkholderia orbicola (strain MC0-3).